Reading from the N-terminus, the 83-residue chain is Exodeoxyribonuclease 7 small subunit (83 aa).

A disordered region spans residues 1 to 25 (MQDELFETEKAPPKNAKNAPKKSFE).

The protein belongs to the XseB family. As to quaternary structure, heterooligomer composed of large and small subunits.

The protein resides in the cytoplasm. The enzyme catalyses Exonucleolytic cleavage in either 5'- to 3'- or 3'- to 5'-direction to yield nucleoside 5'-phosphates.. In terms of biological role, bidirectionally degrades single-stranded DNA into large acid-insoluble oligonucleotides, which are then degraded further into small acid-soluble oligonucleotides. The polypeptide is Exodeoxyribonuclease 7 small subunit (Helicobacter pylori (strain P12)).